Reading from the N-terminus, the 197-residue chain is RIP-like protein (197 aa).

Residues 1–20 (MNSTQSPVYRTSVEQKRHAQ) form a disordered region. The segment at 122–191 (CPVCQIKNLR…GQLYDMCGSC (70 aa)) adopts an RIP-type zinc-finger fold.

The chain is RIP-like protein (Ripalpha) from Drosophila melanogaster (Fruit fly).